Here is a 406-residue protein sequence, read N- to C-terminus: F-box/WD repeat-containing protein mec-15 (406 aa).

Residues 6–53 (PTELISLPSELLCHLFTYLPQRQLITEIPLVCRRFNTILNDDKFWSRR) enclose the F-box domain. WD repeat units lie at residues 101–142 (GHSA…NGED), 156–195 (AHSG…ALQN), 242–279 (LHKR…KPVL), 281–320 (EYSP…VLQT), and 365–406 (SHEL…DQEN).

In terms of assembly, may interact with the SCF ubiquitin ligase complex component skr-1. In terms of tissue distribution, expressed in several neurons in the head, tail and ventral cord, but absent in touch receptor neurons in adults. Expressed in GABAergic and cholinergic motor neurons.

The protein resides in the perikaryon. In terms of biological role, plays a role in mechanosensory transduction (touch sensitivity), touch receptor neuron development and synapse formation. Regulates expression of the protein snb-1 and the distribution of synaptic vesicles at synapses to promote synaptic transmission at the neuromuscular junctions of GABAergic motor neurons. In Caenorhabditis elegans, this protein is F-box/WD repeat-containing protein mec-15.